Consider the following 348-residue polypeptide: Peptidyl-Lys metalloendopeptidase (348 aa).

A signal peptide spans 1-18 (MFSSVMVALVSLAVAVSA). The propeptide occupies 19–181 (NPGLSLKVSG…RATPTLTRPV (163 aa)). Intrachain disulfides connect cysteine 186–cysteine 256 and cysteine 258–cysteine 278. A glycan (O-linked (Man) threonine; partial) is linked at threonine 223. A Zn(2+)-binding site is contributed by histidine 298. Residue glutamate 299 is part of the active site. Zn(2+) is bound by residues histidine 302 and aspartate 311.

Zn(2+) serves as cofactor.

The protein resides in the secreted. It catalyses the reaction Preferential cleavage in proteins: -Xaa-|-Lys- (in which Xaa may be Pro).. With respect to regulation, inhibited by chelating agents such as EDTA and 1,10-phenanthroline. The sequence is that of Peptidyl-Lys metalloendopeptidase (MEP) from Grifola frondosa (Maitake).